Consider the following 568-residue polypeptide: Multidrug and toxin extrusion protein 1 (568 aa).

An N-acetylmethionine modification is found at Met1. Residues Met1–Ala36 lie on the Cytoplasmic side of the membrane. A helical transmembrane segment spans residues Leu37 to Val57. The Extracellular segment spans residues Ser58 to Asn71. A helical transmembrane segment spans residues Ala72 to Ser92. Residues Ser93–Ser119 lie on the Cytoplasmic side of the membrane. The chain crosses the membrane as a helical span at residues Leu120–Leu140. Residues Leu141–Arg151 lie on the Extracellular side of the membrane. A helical transmembrane segment spans residues Leu152–Leu172. Residues Gln173–Lys175 lie on the Cytoplasmic side of the membrane. A helical transmembrane segment spans residues Tyr176 to Val196. The Extracellular segment spans residues Asn197 to Gly214. The chain crosses the membrane as a helical span at residues Ser215–Leu235. Topologically, residues Arg236–Trp255 are cytoplasmic. Residues Ala256–Ile278 traverse the membrane as a helical segment. Over Gly279–Gln294 the chain is Extracellular. The chain crosses the membrane as a helical span at residues Ser295–Val315. At Asn316–Ser335 the chain is on the cytoplasmic side. A helical membrane pass occupies residues Ala336–Cys356. The Extracellular segment spans residues Lys357 to Asp369. The helical transmembrane segment at Ile370 to Leu390 threads the bilayer. At Ala391–Gly407 the chain is on the cytoplasmic side. Residues Ala408–Ala430 traverse the membrane as a helical segment. Residues Lys431–Gly433 lie on the Extracellular side of the membrane. A helical transmembrane segment spans residues Val434 to Ile456. Residues Ala457–Arg544 are Cytoplasmic-facing. Residues Gly545 to Val565 traverse the membrane as a helical segment. Topologically, residues Arg566–Gln568 are extracellular.

It belongs to the multi antimicrobial extrusion (MATE) (TC 2.A.66.1) family. In terms of tissue distribution, predominantly expressed in kidney and liver.

It is found in the cell membrane. The protein resides in the apical cell membrane. It carries out the reaction thiamine(out) + H(+)(in) = thiamine(in) + H(+)(out). The catalysed reaction is estrone 3-sulfate(in) + H(+)(out) = estrone 3-sulfate(out) + H(+)(in). It catalyses the reaction creatinine(in) + H(+)(out) = creatinine(out) + H(+)(in). The enzyme catalyses agmatine(in) + H(+)(out) = agmatine(out) + H(+)(in). Functionally, multidrug efflux pump that functions as a H(+)/organic cation antiporter. Plays a physiological role in the excretion of cationic compounds including endogenous metabolites, drugs, toxins through the kidney and liver, into urine and bile respectively. Mediates the efflux of endogenous compounds such as creatinine, vitamin B1/thiamine, agmatine and estrone-3-sulfate. May also contribute to regulate the transport of cationic compounds in testis across the blood-testis-barrier. This is Multidrug and toxin extrusion protein 1 (SLC47A1) from Oryctolagus cuniculus (Rabbit).